The primary structure comprises 523 residues: Ribonuclease Y (523 aa).

The chain crosses the membrane as a helical span at residues 28–48; it reads TYYIVATIIIAVIAVYVDYYI. In terms of domain architecture, KH spans 227 to 312; that stretch reads TVYVVNLPND…EMVEKAKKEV (86 aa). One can recognise an HD domain in the interval 353-446; that stretch reads VLKHSIEVSY…VQAADAISAA (94 aa).

The protein belongs to the RNase Y family.

The protein localises to the cell membrane. Endoribonuclease that initiates mRNA decay. The sequence is that of Ribonuclease Y from Clostridium tetani (strain Massachusetts / E88).